Consider the following 263-residue polypeptide: Small ribosomal subunit protein eS4 (263 aa).

One can recognise an S4 RNA-binding domain in the interval Leu42–Asp104.

The protein belongs to the eukaryotic ribosomal protein eS4 family.

This chain is Small ribosomal subunit protein eS4 (RPS4), found in Gallus gallus (Chicken).